The sequence spans 287 residues: Lipoyl synthase (287 aa).

Positions 34, 39, 45, 60, 64, 67, and 273 each coordinate [4Fe-4S] cluster. The region spanning 46–262 (WNKRHATVMI…KYIAYSKGFL (217 aa)) is the Radical SAM core domain.

It belongs to the radical SAM superfamily. Lipoyl synthase family. It depends on [4Fe-4S] cluster as a cofactor.

It localises to the cytoplasm. The enzyme catalyses [[Fe-S] cluster scaffold protein carrying a second [4Fe-4S](2+) cluster] + N(6)-octanoyl-L-lysyl-[protein] + 2 oxidized [2Fe-2S]-[ferredoxin] + 2 S-adenosyl-L-methionine + 4 H(+) = [[Fe-S] cluster scaffold protein] + N(6)-[(R)-dihydrolipoyl]-L-lysyl-[protein] + 4 Fe(3+) + 2 hydrogen sulfide + 2 5'-deoxyadenosine + 2 L-methionine + 2 reduced [2Fe-2S]-[ferredoxin]. It functions in the pathway protein modification; protein lipoylation via endogenous pathway; protein N(6)-(lipoyl)lysine from octanoyl-[acyl-carrier-protein]: step 2/2. Catalyzes the radical-mediated insertion of two sulfur atoms into the C-6 and C-8 positions of the octanoyl moiety bound to the lipoyl domains of lipoate-dependent enzymes, thereby converting the octanoylated domains into lipoylated derivatives. This is Lipoyl synthase from Wolbachia sp. subsp. Brugia malayi (strain TRS).